We begin with the raw amino-acid sequence, 487 residues long: MDTTNFEDIRNEWIEQGQGHVFNWFDKLSNEEKLNFENDIRKINVKEVNKDYKNVLLNKDEQKIMKYEHFENVMTLNKIKEQDKKKWEDIGYELISKGEVAVLLLAGGQATRLGTTFPKGFYDVGLPSKKSLFQLQAERIYRLQQLVSERYNGSYDQDSKPIQWYIMTSEATHSETIKFFENKNYFGLKKSAFFFFSQAMIPCITPEDGKIISESGSKLSLSPNGNGGLFKALSTSGAIDDMRKKGIKYVTQYCVDNILINMADPVFVGYMHDQSADCGAKVVSKSDPKEPVGVMALNGDGKPFVLEYSEIDEQSKFKKDQNGQLVFNYAHICINAFSFDFLDRIAKNHLDHLKYHVAFKKIPSAHPISGERQSPSSPNGWKLEKFIFDVFPFSKKMVCLEIERSKEFSPLKNCGGMNLPDSPETCLRDISNLHKSFIENSGGKIDSSNSTICEVSPLVSLNGENLKNFVNDKTFILPIEINQNLNN.

The short motif at 105–108 (LAGG) is the Substrate binding element. Residues 105-108 (LAGG), Lys-119, Gln-198, and Gly-225 contribute to the UTP site. Asn-226 lines the substrate pocket. Residue Asp-256 coordinates UTP. A Substrate binding motif is present at residues 307-308 (EY). Position 382 (Lys-382) interacts with UTP. Residue Lys-412 participates in substrate binding.

It belongs to the UDPGP type 1 family.

It is found in the cytoplasm. The catalysed reaction is N-acetyl-alpha-D-glucosamine 1-phosphate + UTP + H(+) = UDP-N-acetyl-alpha-D-glucosamine + diphosphate. It functions in the pathway nucleotide-sugar biosynthesis; UDP-N-acetyl-alpha-D-glucosamine biosynthesis; UDP-N-acetyl-alpha-D-glucosamine from N-acetyl-alpha-D-glucosamine 1-phosphate: step 1/1. This is Probable UDP-N-acetylglucosamine pyrophosphorylase (uap1) from Dictyostelium discoideum (Social amoeba).